A 154-amino-acid chain; its full sequence is 3-hydroxyacyl-[acyl-carrier-protein] dehydratase FabZ (154 aa).

The active site involves His-54.

The protein belongs to the thioester dehydratase family. FabZ subfamily.

It localises to the cytoplasm. It catalyses the reaction a (3R)-hydroxyacyl-[ACP] = a (2E)-enoyl-[ACP] + H2O. Functionally, involved in unsaturated fatty acids biosynthesis. Catalyzes the dehydration of short chain beta-hydroxyacyl-ACPs and long chain saturated and unsaturated beta-hydroxyacyl-ACPs. In Shewanella putrefaciens (strain CN-32 / ATCC BAA-453), this protein is 3-hydroxyacyl-[acyl-carrier-protein] dehydratase FabZ.